The primary structure comprises 213 residues: General transcription factor 3C polypeptide 6 (213 aa).

Positions 1-11 are enriched in basic and acidic residues; it reads MAAAADERSPE. Disordered stretches follow at residues 1 to 20 and 191 to 213; these read MAAAADERSPEDGEDEEEEE and SGPLIDIPSETEGSVFMETQMLP. Ala-2 carries the post-translational modification N-acetylalanine. Residue Ser-9 is modified to Phosphoserine.

It belongs to the TFIIIC subunit 6 family. As to quaternary structure, part of the TFIIIC subcomplex TFIIIC2, consisting of six subunits, GTF3C1, GTF3C2, GTF3C3, GTF3C4, GTF3C5 and GTF3C6. Interacts with GTF3C4 and GTF3C5.

Its subcellular location is the nucleus. Functionally, involved in RNA polymerase III-mediated transcription. Integral, tightly associated component of the DNA-binding TFIIIC2 subcomplex that directly binds tRNA and virus-associated RNA promoters. This chain is General transcription factor 3C polypeptide 6 (GTF3C6), found in Homo sapiens (Human).